Here is a 414-residue protein sequence, read N- to C-terminus: FAD-dependent monooxygenase adaC (414 aa).

FAD contacts are provided by E32, A43, R115, D325, and G338.

This sequence belongs to the paxM FAD-dependent monooxygenase family. FAD serves as cofactor.

The catalysed reaction is 3-(2,4-dioxopentyl)-3,6,8,9-tetrahydroxy-1-oxo-1,2,3,4-tetrahydroanthracene-2-carboxyl-[ACP] + NADPH + O2 + H(+) = 3-(2,4-dioxopentyl)-2,3,6,8,9-pentahydroxy-1-oxo-1,2,3,4-tetrahydroanthracene-2-carboxyl-[ACP] + NADP(+) + H2O. The protein operates within secondary metabolite biosynthesis. In terms of biological role, FAD-dependent monooxygenase; part of the gene cluster that mediates the biosynthesis of the linear tetracyclic TAN-1612 neuropeptide Y receptor antagonist. The decaketide backbone of TAN-1612 is synthesized by the non-reducing polyketide synthase adaA via condensation of one acetyl-CoA starter unit with 9 malonyl-CoA units. The FAD-dependent monooxygenase adaC then performs hydroxylation at C2 while the polaketide chain is still attached to the NRPKS adaA. The alpha-hydroxylation step at C2 appears to be crucial for the following C18-C1 Claisen cyclization and release of the C9-hydroxyl version of TAN-1612 from the NRPKS adaA, two steps performed by the lactamase-like protein adaB. Finally, the O-methyltransferase adaD performs the C9 O-methylation to complete the biosynthesis of TAN-1612. The protein is FAD-dependent monooxygenase adaC of Aspergillus niger (strain ATCC MYA-4892 / CBS 513.88 / FGSC A1513).